Here is a 215-residue protein sequence, read N- to C-terminus: Redox-sensing transcriptional repressor Rex (215 aa).

A DNA-binding region (H-T-H motif) is located at residues 18-57 (LYYRFLKNLHASGKQRVSSAELSEAVKVDPATIRRDFSYF). NAD(+) is bound at residue 92–97 (GVGNLG).

It belongs to the transcriptional regulatory Rex family. As to quaternary structure, homodimer.

The protein resides in the cytoplasm. Its function is as follows. Modulates transcription in response to changes in cellular NADH/NAD(+) redox state. The sequence is that of Redox-sensing transcriptional repressor Rex from Geobacillus sp. (strain WCH70).